Reading from the N-terminus, the 453-residue chain is Tol-Pal system protein TolB (453 aa).

The N-terminal stretch at 1 to 39 (MSFIPNTEAEALSALFSRRSVLGATAAGGLLATPLAAFA) is a signal peptide.

This sequence belongs to the TolB family. In terms of assembly, the Tol-Pal system is composed of five core proteins: the inner membrane proteins TolA, TolQ and TolR, the periplasmic protein TolB and the outer membrane protein Pal. They form a network linking the inner and outer membranes and the peptidoglycan layer.

It is found in the periplasm. Functionally, part of the Tol-Pal system, which plays a role in outer membrane invagination during cell division and is important for maintaining outer membrane integrity. This is Tol-Pal system protein TolB from Gluconobacter oxydans (strain 621H) (Gluconobacter suboxydans).